Here is a 405-residue protein sequence, read N- to C-terminus: Glucose-1-phosphate adenylyltransferase 1 (405 aa).

Alpha-D-glucose 1-phosphate-binding positions include Tyr96, Gly161, 176–177 (EK), and Ser194.

Belongs to the bacterial/plant glucose-1-phosphate adenylyltransferase family. In terms of assembly, homotetramer.

The enzyme catalyses alpha-D-glucose 1-phosphate + ATP + H(+) = ADP-alpha-D-glucose + diphosphate. It participates in glycan biosynthesis; glycogen biosynthesis. Involved in the biosynthesis of ADP-glucose, a building block required for the elongation reactions to produce glycogen. Catalyzes the reaction between ATP and alpha-D-glucose 1-phosphate (G1P) to produce pyrophosphate and ADP-Glc. The polypeptide is Glucose-1-phosphate adenylyltransferase 1 (Vibrio parahaemolyticus serotype O3:K6 (strain RIMD 2210633)).